The primary structure comprises 157 residues: SsrA-binding protein (157 aa).

Residues 134-157 (HDKRESEKKRDWGREKGRLLRARG) form a disordered region. Over residues 135–151 (DKRESEKKRDWGREKGR) the composition is skewed to basic and acidic residues.

It belongs to the SmpB family.

Its subcellular location is the cytoplasm. Its function is as follows. Required for rescue of stalled ribosomes mediated by trans-translation. Binds to transfer-messenger RNA (tmRNA), required for stable association of tmRNA with ribosomes. tmRNA and SmpB together mimic tRNA shape, replacing the anticodon stem-loop with SmpB. tmRNA is encoded by the ssrA gene; the 2 termini fold to resemble tRNA(Ala) and it encodes a 'tag peptide', a short internal open reading frame. During trans-translation Ala-aminoacylated tmRNA acts like a tRNA, entering the A-site of stalled ribosomes, displacing the stalled mRNA. The ribosome then switches to translate the ORF on the tmRNA; the nascent peptide is terminated with the 'tag peptide' encoded by the tmRNA and targeted for degradation. The ribosome is freed to recommence translation, which seems to be the essential function of trans-translation. This is SsrA-binding protein from Nitrobacter hamburgensis (strain DSM 10229 / NCIMB 13809 / X14).